A 254-amino-acid polypeptide reads, in one-letter code: Phosphoribosylaminoimidazole-succinocarboxamide synthase (254 aa).

Belongs to the SAICAR synthetase family.

The enzyme catalyses 5-amino-1-(5-phospho-D-ribosyl)imidazole-4-carboxylate + L-aspartate + ATP = (2S)-2-[5-amino-1-(5-phospho-beta-D-ribosyl)imidazole-4-carboxamido]succinate + ADP + phosphate + 2 H(+). It functions in the pathway purine metabolism; IMP biosynthesis via de novo pathway; 5-amino-1-(5-phospho-D-ribosyl)imidazole-4-carboxamide from 5-amino-1-(5-phospho-D-ribosyl)imidazole-4-carboxylate: step 1/2. In Bartonella quintana (strain Toulouse) (Rochalimaea quintana), this protein is Phosphoribosylaminoimidazole-succinocarboxamide synthase.